A 135-amino-acid polypeptide reads, in one-letter code: Type 3 secretion system stator protein (135 aa).

This sequence belongs to the SctL stator family. As to quaternary structure, the core secretion machinery of the T3SS is composed of approximately 20 different proteins, including cytoplasmic components, a base, an export apparatus and a needle. This subunit is part of the cytosolic complex.

The protein resides in the cytoplasm. Its function is as follows. Component of the type III secretion system (T3SS), also called injectisome, which is used to inject bacterial effector proteins into eukaryotic host cells. Acts as a regulator of the HrcN/SctN ATPase activity. The polypeptide is Type 3 secretion system stator protein (Rhizobium fredii (Sinorhizobium fredii)).